Consider the following 68-residue polypeptide: SQCQGKRSWPQLVGSTGAAAKAVIERENPRVRAVIVRVGSPVTADFRCDRVRVWVTERGIVARPPAIG.

Serine 1 carries the post-translational modification N-acetylserine. Cysteine 3 and cysteine 48 form a disulfide bridge.

This sequence belongs to the protease inhibitor I13 (potato type I serine protease inhibitor) family.

In terms of biological role, competitively inhibits Glu S.griseus protease by forming probably a 1:1 complex. BGIA has no inhibitory activity against 2 other acidic amino acid-specific endopeptidases (S.aureus protease V8 and B.subtilis proteinase), chymotrypsin, trypsin, pancreatic elastase, and papain, although subtilisin Carlsberg was strongly inhibited. In Momordica charantia (Bitter gourd), this protein is Glu S.griseus protease inhibitor.